Consider the following 257-residue polypeptide: Phosphate import ATP-binding protein PstB (257 aa).

The ABC transporter domain occupies 5–246 (LEIKDLTAFY…EVIFTSPKNE (242 aa)). 37-44 (GPSGCGKS) contributes to the ATP binding site.

It belongs to the ABC transporter superfamily. Phosphate importer (TC 3.A.1.7) family. As to quaternary structure, the complex is composed of two ATP-binding proteins (PstB), two transmembrane proteins (PstC and PstA) and a solute-binding protein (PstS).

It localises to the cell membrane. The catalysed reaction is phosphate(out) + ATP + H2O = ADP + 2 phosphate(in) + H(+). Functionally, part of the ABC transporter complex PstSACB involved in phosphate import. Responsible for energy coupling to the transport system. This is Phosphate import ATP-binding protein PstB from Tropheryma whipplei (strain Twist) (Whipple's bacillus).